Consider the following 193-residue polypeptide: ATP-dependent Clp protease proteolytic subunit (193 aa).

Ser98 acts as the Nucleophile in catalysis. His123 is an active-site residue.

It belongs to the peptidase S14 family. In terms of assembly, fourteen ClpP subunits assemble into 2 heptameric rings which stack back to back to give a disk-like structure with a central cavity, resembling the structure of eukaryotic proteasomes.

It is found in the cytoplasm. It catalyses the reaction Hydrolysis of proteins to small peptides in the presence of ATP and magnesium. alpha-casein is the usual test substrate. In the absence of ATP, only oligopeptides shorter than five residues are hydrolyzed (such as succinyl-Leu-Tyr-|-NHMec, and Leu-Tyr-Leu-|-Tyr-Trp, in which cleavage of the -Tyr-|-Leu- and -Tyr-|-Trp bonds also occurs).. In terms of biological role, cleaves peptides in various proteins in a process that requires ATP hydrolysis. Has a chymotrypsin-like activity. Plays a major role in the degradation of misfolded proteins. This Agathobacter rectalis (strain ATCC 33656 / DSM 3377 / JCM 17463 / KCTC 5835 / VPI 0990) (Eubacterium rectale) protein is ATP-dependent Clp protease proteolytic subunit.